The chain runs to 567 residues: Adenine deaminase 2 (567 aa).

It belongs to the metallo-dependent hydrolases superfamily. Adenine deaminase family. The cofactor is Mn(2+).

The catalysed reaction is adenine + H2O + H(+) = hypoxanthine + NH4(+). This Oenococcus oeni (strain ATCC BAA-331 / PSU-1) protein is Adenine deaminase 2.